The sequence spans 177 residues: dCTP deaminase, dUMP-forming (177 aa).

DCTP is bound by residues 95 to 100 (RSSLGR), D112, 120 to 122 (TLE), Q141, Y155, and Q162. E122 functions as the Proton donor/acceptor in the catalytic mechanism.

The protein belongs to the dCTP deaminase family. As to quaternary structure, homotrimer.

The catalysed reaction is dCTP + 2 H2O = dUMP + NH4(+) + diphosphate. It functions in the pathway pyrimidine metabolism; dUMP biosynthesis; dUMP from dCTP: step 1/1. Bifunctional enzyme that catalyzes both the deamination of dCTP to dUTP and the hydrolysis of dUTP to dUMP without releasing the toxic dUTP intermediate. This chain is dCTP deaminase, dUMP-forming, found in Hydrogenobaculum sp. (strain Y04AAS1).